A 670-amino-acid polypeptide reads, in one-letter code: DNA ligase (670 aa).

NAD(+) is bound by residues 32-36 (DAEYD), 81-82 (SL), and E113. K115 acts as the N6-AMP-lysine intermediate in catalysis. NAD(+) contacts are provided by R136, E173, K290, and K314. Positions 408, 411, 426, and 432 each coordinate Zn(2+). A BRCT domain is found at 592–670 (EIDSPFAGKT…EAEMIRLLGE (79 aa)).

The protein belongs to the NAD-dependent DNA ligase family. LigA subfamily. Mg(2+) serves as cofactor. Mn(2+) is required as a cofactor.

The catalysed reaction is NAD(+) + (deoxyribonucleotide)n-3'-hydroxyl + 5'-phospho-(deoxyribonucleotide)m = (deoxyribonucleotide)n+m + AMP + beta-nicotinamide D-nucleotide.. DNA ligase that catalyzes the formation of phosphodiester linkages between 5'-phosphoryl and 3'-hydroxyl groups in double-stranded DNA using NAD as a coenzyme and as the energy source for the reaction. It is essential for DNA replication and repair of damaged DNA. The polypeptide is DNA ligase (Yersinia pseudotuberculosis serotype IB (strain PB1/+)).